The following is a 637-amino-acid chain: Early transcription factor 70 kDa subunit (637 aa).

The 154-residue stretch at 32–185 folds into the Helicase ATP-binding domain; sequence RTIIDENRSV…GHIIDLMSEE (154 aa). 45-52 contributes to the ATP binding site; the sequence is HIMGSGKT. Positions 135 to 138 match the DEXH box motif; the sequence is DEAH. The Helicase C-terminal domain maps to 327-507; sequence KFKYFINRIQ…VLPFDIKKLL (181 aa).

The protein belongs to the helicase family. VETF subfamily. In terms of assembly, heterodimer of a 70 kDa and a 82 kDa subunit. Part of the early transcription complex composed of ETF, RAP94/OPG109, and the DNA-directed RNA polymerase.

It is found in the virion. Functionally, acts with RNA polymerase to initiate transcription from early gene promoters. Is recruited by the RPO-associated protein of 94 kDa RAP94/OPG109 to form the early transcription complex, which also contains the core RNA polymerase. ETF heterodimer binds to early gene promoters. In Vaccinia virus (strain Ankara) (VACV), this protein is Early transcription factor 70 kDa subunit (OPG118).